The sequence spans 248 residues: Probable septum site-determining protein MinC (248 aa).

A disordered region spans residues 94-125; that stretch reads GMPPAMRGGQPAADFEAPAGEPQANPGAPEPQ.

It belongs to the MinC family. In terms of assembly, interacts with MinD and FtsZ.

Functionally, cell division inhibitor that blocks the formation of polar Z ring septums. Rapidly oscillates between the poles of the cell to destabilize FtsZ filaments that have formed before they mature into polar Z rings. Prevents FtsZ polymerization. This chain is Probable septum site-determining protein MinC, found in Brucella abortus (strain S19).